Reading from the N-terminus, the 868-residue chain is Probable inorganic carbon transporter subunit DabA (868 aa).

Positions 392, 394, 574, and 589 each coordinate Zn(2+).

This sequence belongs to the inorganic carbon transporter (TC 9.A.2) DabA family. In terms of assembly, forms a complex with DabB. It depends on Zn(2+) as a cofactor.

Its subcellular location is the cell membrane. In terms of biological role, part of an energy-coupled inorganic carbon pump. The polypeptide is Probable inorganic carbon transporter subunit DabA (Bacillus cereus (strain B4264)).